A 217-amino-acid chain; its full sequence is MRAILMGPPGAGKGTQAADLITRYQIPHISTGDMFRAAIKAGTALGMKAKEYMDAGSLVPDEVTIGIVAERLAEPDCSKGFLLDGFPRTVAQADALDKILTQLKMNLDGVINIEVPEAKLLERLTGRRICRQCGGTYHMVFNPPAAEAVCDKCGGELYQRSDDTLETAKNRLQVYNDQTQPLIDYYREKGLLKEINGDQDIAQVLQDIVDAMEHGHD.

10 to 15 (GAGKGT) lines the ATP pocket. Residues 30–59 (STGDMFRAAIKAGTALGMKAKEYMDAGSLV) form an NMP region. AMP contacts are provided by residues threonine 31, arginine 36, 57–59 (SLV), 85–88 (GFPR), and glutamine 92. Residues 126 to 163 (GRRICRQCGGTYHMVFNPPAAEAVCDKCGGELYQRSDD) are LID. Arginine 127 provides a ligand contact to ATP. Residues cysteine 130 and cysteine 133 each contribute to the Zn(2+) site. 136–137 (TY) contributes to the ATP binding site. Positions 150 and 153 each coordinate Zn(2+). The AMP site is built by arginine 160 and arginine 171. Glutamine 199 is an ATP binding site.

Belongs to the adenylate kinase family. As to quaternary structure, monomer.

It localises to the cytoplasm. It catalyses the reaction AMP + ATP = 2 ADP. The protein operates within purine metabolism; AMP biosynthesis via salvage pathway; AMP from ADP: step 1/1. Its function is as follows. Catalyzes the reversible transfer of the terminal phosphate group between ATP and AMP. Plays an important role in cellular energy homeostasis and in adenine nucleotide metabolism. This chain is Adenylate kinase, found in Desulfitobacterium hafniense (strain DSM 10664 / DCB-2).